The following is a 1000-amino-acid chain: Exportin-T (1000 aa).

The protein belongs to the exportin family.

The protein resides in the nucleus. It localises to the cytoplasm. Functionally, tRNA nucleus export receptor which facilitates tRNA translocation across the nuclear pore complex. Involved in pre-tRNA splicing, probably by affecting the interaction of pre-tRNA with splicing endonuclease. The sequence is that of Exportin-T (LOS1) from Debaryomyces hansenii (strain ATCC 36239 / CBS 767 / BCRC 21394 / JCM 1990 / NBRC 0083 / IGC 2968) (Yeast).